Reading from the N-terminus, the 99-residue chain is MALTKAEMVERLFDEVGLNKREAKEFVDTFFDLLRDALEQGRQIKLSGFGNFELRCKNQRPGRNPKTGEEIPISARTVVTFRSGQKLKERVDAYVGSRQ.

This sequence belongs to the bacterial histone-like protein family. As to quaternary structure, heterodimer of an alpha and a beta chain.

In terms of biological role, this protein is one of the two subunits of integration host factor, a specific DNA-binding protein that functions in genetic recombination as well as in transcriptional and translational control. This is Integration host factor subunit alpha (ihfA) from Xylella fastidiosa (strain 9a5c).